We begin with the raw amino-acid sequence, 188 residues long: E3 ubiquitin-protein ligase RNF183 (188 aa).

Over 1-157 the chain is Cytoplasmic; sequence MAEQQGREPE…RECFRNPHFR (157 aa). The segment at 11–58 adopts an RING-type zinc-finger fold; it reads CPVCWNPFNNTFHTPKVLDCCHSFCVECLAHISLVTPTRRRLLCPLCR. A helical; Anchor for type IV membrane protein membrane pass occupies residues 158 to 178; sequence IFAYMMAVILCGTVLFIFSIF. Over 179–188 the chain is Lumenal; that stretch reads CTRRFFWGVG.

Interacts with FATE1. Interacts with SEC16A. Interacts with BCL2L1. In terms of processing, autoubiquitinated (in vitro).

The protein localises to the endoplasmic reticulum membrane. It localises to the endoplasmic reticulum. The protein resides in the golgi apparatus. It is found in the cis-Golgi network membrane. Its subcellular location is the lysosome. It carries out the reaction S-ubiquitinyl-[E2 ubiquitin-conjugating enzyme]-L-cysteine + [acceptor protein]-L-lysine = [E2 ubiquitin-conjugating enzyme]-L-cysteine + N(6)-ubiquitinyl-[acceptor protein]-L-lysine.. Its pathway is protein modification; protein ubiquitination. In terms of biological role, acts as an E3 ubiquitin ligase catalyzing the covalent attachment of ubiquitin moieties onto substrate proteins. Triggers apoptosis in response to prolonged ER stress by mediating the polyubiquitination and subsequent proteasomal degradation of BCL2L1. May collaborate with FATE1 to restrain BIK protein levels thus regulating apoptotic signaling. This chain is E3 ubiquitin-protein ligase RNF183 (RNF183), found in Bos taurus (Bovine).